A 354-amino-acid chain; its full sequence is 3-dehydroquinate synthase (354 aa).

NAD(+) contacts are provided by residues 61 to 66 (DGESTK), 119 to 120 (TT), lysine 132, lysine 141, and 159 to 162 (FLET). Zn(2+) is bound by residues glutamate 174, histidine 238, and histidine 254.

Belongs to the sugar phosphate cyclases superfamily. Dehydroquinate synthase family. NAD(+) serves as cofactor. It depends on Co(2+) as a cofactor. Zn(2+) is required as a cofactor.

It localises to the cytoplasm. The catalysed reaction is 7-phospho-2-dehydro-3-deoxy-D-arabino-heptonate = 3-dehydroquinate + phosphate. Its pathway is metabolic intermediate biosynthesis; chorismate biosynthesis; chorismate from D-erythrose 4-phosphate and phosphoenolpyruvate: step 2/7. Its function is as follows. Catalyzes the conversion of 3-deoxy-D-arabino-heptulosonate 7-phosphate (DAHP) to dehydroquinate (DHQ). The protein is 3-dehydroquinate synthase of Saccharolobus solfataricus (strain ATCC 35092 / DSM 1617 / JCM 11322 / P2) (Sulfolobus solfataricus).